Consider the following 74-residue polypeptide: RNA-binding protein Hfq (74 aa).

A Sm domain is found at 9–69; it reads DQFLNQLRKE…ISTFMPQKNV (61 aa).

This sequence belongs to the Hfq family. Homohexamer.

Its function is as follows. RNA chaperone that binds small regulatory RNA (sRNAs) and mRNAs to facilitate mRNA translational regulation in response to envelope stress, environmental stress and changes in metabolite concentrations. Also binds with high specificity to tRNAs. This chain is RNA-binding protein Hfq, found in Bacillus cytotoxicus (strain DSM 22905 / CIP 110041 / 391-98 / NVH 391-98).